The sequence spans 333 residues: MSVRLRQIVEALGGTIEGGGGDVEILRIAPLESAEPGDLAFLSNPRYRQQLAASRAACVIVAPAMREEALARGACIVAEDPYAYFARATQLWKRLHGRTPAAGVHPSAVVDPDAFVDPSAHIGPLCVVERGARIGAGTVLTSRITVGEGCRIGERCLLHPGVVIGADGFGFAAEGGAWTKIEQLGAVRIGDDVEIGANTCIDRGALDDTVIEDGVKLDNLVQIGHNVHIGRHTAVAGCTGVSGSTRIGARCMIGGAAMILGHLEIADGVQVSPGTAITRSVLKPGLYSGMFPFDENAKWEKNAATLRQLHGLRARIMALEEQIRKDGPTAHIQ.

The Proton acceptor role is filled by His-225.

It belongs to the transferase hexapeptide repeat family. LpxD subfamily. As to quaternary structure, homotrimer.

It catalyses the reaction a UDP-3-O-[(3R)-3-hydroxyacyl]-alpha-D-glucosamine + a (3R)-hydroxyacyl-[ACP] = a UDP-2-N,3-O-bis[(3R)-3-hydroxyacyl]-alpha-D-glucosamine + holo-[ACP] + H(+). It participates in bacterial outer membrane biogenesis; LPS lipid A biosynthesis. In terms of biological role, catalyzes the N-acylation of UDP-3-O-acylglucosamine using 3-hydroxyacyl-ACP as the acyl donor. Is involved in the biosynthesis of lipid A, a phosphorylated glycolipid that anchors the lipopolysaccharide to the outer membrane of the cell. The polypeptide is UDP-3-O-acylglucosamine N-acyltransferase (Paracidovorax citrulli (strain AAC00-1) (Acidovorax citrulli)).